Reading from the N-terminus, the 132-residue chain is Large ribosomal subunit protein uL14 (132 aa).

It belongs to the universal ribosomal protein uL14 family. As to quaternary structure, part of the 50S ribosomal subunit. Forms a cluster with proteins L3 and L24e, part of which may contact the 16S rRNA in 2 intersubunit bridges.

Its function is as follows. Binds to 23S rRNA. Forms part of two intersubunit bridges in the 70S ribosome. The chain is Large ribosomal subunit protein uL14 from Methanothrix thermoacetophila (strain DSM 6194 / JCM 14653 / NBRC 101360 / PT) (Methanosaeta thermophila).